Here is a 326-residue protein sequence, read N- to C-terminus: tRNA-modifying protein YgfZ (326 aa).

Folate contacts are provided by W27 and W189.

It belongs to the tRNA-modifying YgfZ family.

The protein resides in the cytoplasm. In terms of biological role, folate-binding protein involved in regulating the level of ATP-DnaA and in the modification of some tRNAs. It is probably a key factor in regulatory networks that act via tRNA modification, such as initiation of chromosomal replication. The protein is tRNA-modifying protein YgfZ of Escherichia coli O7:K1 (strain IAI39 / ExPEC).